A 202-amino-acid polypeptide reads, in one-letter code: N-(5'-phosphoribosyl)anthranilate isomerase (202 aa).

It belongs to the TrpF family.

It carries out the reaction N-(5-phospho-beta-D-ribosyl)anthranilate = 1-(2-carboxyphenylamino)-1-deoxy-D-ribulose 5-phosphate. It participates in amino-acid biosynthesis; L-tryptophan biosynthesis; L-tryptophan from chorismate: step 3/5. This is N-(5'-phosphoribosyl)anthranilate isomerase from Geobacter metallireducens (strain ATCC 53774 / DSM 7210 / GS-15).